We begin with the raw amino-acid sequence, 400 residues long: CCA-adding enzyme (400 aa).

2 residues coordinate ATP: Gly28 and Arg31. Residues Gly28 and Arg31 each coordinate CTP. Mg(2+) is bound by residues Asp41 and Asp43. Residues Arg112, Asp155, Arg158, Arg161, and Arg164 each contribute to the ATP site. CTP-binding residues include Arg112, Asp155, Arg158, Arg161, and Arg164.

The protein belongs to the tRNA nucleotidyltransferase/poly(A) polymerase family. Bacterial CCA-adding enzyme type 3 subfamily. In terms of assembly, homodimer. Requires Mg(2+) as cofactor.

The enzyme catalyses a tRNA precursor + 2 CTP + ATP = a tRNA with a 3' CCA end + 3 diphosphate. It carries out the reaction a tRNA with a 3' CCA end + 2 CTP + ATP = a tRNA with a 3' CCACCA end + 3 diphosphate. Functionally, catalyzes the addition and repair of the essential 3'-terminal CCA sequence in tRNAs without using a nucleic acid template. Adds these three nucleotides in the order of C, C, and A to the tRNA nucleotide-73, using CTP and ATP as substrates and producing inorganic pyrophosphate. tRNA 3'-terminal CCA addition is required both for tRNA processing and repair. Also involved in tRNA surveillance by mediating tandem CCA addition to generate a CCACCA at the 3' terminus of unstable tRNAs. While stable tRNAs receive only 3'-terminal CCA, unstable tRNAs are marked with CCACCA and rapidly degraded. This is CCA-adding enzyme from Staphylococcus epidermidis (strain ATCC 12228 / FDA PCI 1200).